A 258-amino-acid chain; its full sequence is Phosphate import ATP-binding protein PstB (258 aa).

One can recognise an ABC transporter domain in the interval 5–247; sequence LDLKGVNIYY…EKIFSNPSQK (243 aa). Residue 37–44 participates in ATP binding; it reads GPSGCGKT.

Belongs to the ABC transporter superfamily. Phosphate importer (TC 3.A.1.7) family. As to quaternary structure, the complex is composed of two ATP-binding proteins (PstB), two transmembrane proteins (PstC and PstA) and a solute-binding protein (PstS).

The protein resides in the cell membrane. It catalyses the reaction phosphate(out) + ATP + H2O = ADP + 2 phosphate(in) + H(+). In terms of biological role, part of the ABC transporter complex PstSACB involved in phosphate import. Responsible for energy coupling to the transport system. The chain is Phosphate import ATP-binding protein PstB from Mycolicibacterium paratuberculosis (strain ATCC BAA-968 / K-10) (Mycobacterium paratuberculosis).